The chain runs to 319 residues: Geranylgeranyl pyrophosphate synthase (319 aa).

Positions 42, 45, and 74 each coordinate isopentenyl diphosphate. Residues aspartate 81 and aspartate 85 each coordinate Mg(2+). Arginine 90 contributes to the dimethylallyl diphosphate binding site. Residue arginine 91 participates in isopentenyl diphosphate binding. Dimethylallyl diphosphate is bound by residues lysine 172, threonine 173, glutamine 210, lysine 226, and lysine 236.

This sequence belongs to the FPP/GGPP synthase family. In terms of assembly, homodimer. Requires Mg(2+) as cofactor.

It catalyses the reaction isopentenyl diphosphate + dimethylallyl diphosphate = (2E)-geranyl diphosphate + diphosphate. The enzyme catalyses isopentenyl diphosphate + (2E)-geranyl diphosphate = (2E,6E)-farnesyl diphosphate + diphosphate. The catalysed reaction is isopentenyl diphosphate + (2E,6E)-farnesyl diphosphate = (2E,6E,10E)-geranylgeranyl diphosphate + diphosphate. The protein operates within isoprenoid biosynthesis; geranyl diphosphate biosynthesis; geranyl diphosphate from dimethylallyl diphosphate and isopentenyl diphosphate: step 1/1. It functions in the pathway isoprenoid biosynthesis; farnesyl diphosphate biosynthesis; farnesyl diphosphate from geranyl diphosphate and isopentenyl diphosphate: step 1/1. It participates in isoprenoid biosynthesis; geranylgeranyl diphosphate biosynthesis; geranylgeranyl diphosphate from farnesyl diphosphate and isopentenyl diphosphate: step 1/1. Its function is as follows. Catalyzes the addition of 3 molecules of isopentenyl diphosphate (IPP) onto dimethylallyl diphosphate (DMAPP) to form geranylgeranyl pyrophosphate (GGPP). Catalyzes the synthesis of geranylgeranyl pyrophosphate as a major product and of farnesyl pyrophosphate in smaller amounts. The chain is Geranylgeranyl pyrophosphate synthase from Geoglobus acetivorans.